A 313-amino-acid chain; its full sequence is E3 ubiquitin-protein ligase SGIP1 (313 aa).

In terms of domain architecture, F-box spans 16 to 65; the sequence is REYSKEIPIDLLIEIFSRLSTGDIARCRCVSKIWSSVPRLRDFTELFLKI.

In terms of assembly, interacts with SGS3 in cytoplasmic granules.

The protein localises to the cytoplasmic granule. It catalyses the reaction S-ubiquitinyl-[E2 ubiquitin-conjugating enzyme]-L-cysteine + [acceptor protein]-L-lysine = [E2 ubiquitin-conjugating enzyme]-L-cysteine + N(6)-ubiquitinyl-[acceptor protein]-L-lysine.. Its pathway is protein degradation; proteasomal ubiquitin-dependent pathway. It participates in protein modification; protein ubiquitination. E3 ubiquitin-protein ligase which triggers the ubiquitination and subsequent degradation of SGS3 in response to heat. Involved in the mechanisms necessary for quick response to heat and subsequent heritable transgenerational memory of heat acclimation (global warming) such as early flowering and attenuated immunity; this process includes epigenetic regulation as well as post-transcriptional gene silencing (PTGS). In response to heat, HSFA2 is activated and promotes the expression of REF6 which in turn derepresses HSFA2, thus establishing an inheritable feedback loop able to trigger SGIP1 and subsequent SGIP1-mediated SGS3 degradation; this prevents the biosynthesis of trans-acting siRNA (tasiRNA) and leads to the release of HTT5, which drives early flowering but attenuates immunity. This is E3 ubiquitin-protein ligase SGIP1 from Arabidopsis thaliana (Mouse-ear cress).